Consider the following 558-residue polypeptide: Urocanate hydratase (558 aa).

NAD(+) is bound by residues 54–55 (GG), glutamine 132, 178–180 (GMG), glutamate 198, 244–245 (NA), 265–269 (QTSAH), 275–276 (YL), and tyrosine 324. Cysteine 412 is an active-site residue. Glycine 494 contacts NAD(+).

It belongs to the urocanase family. The cofactor is NAD(+).

Its subcellular location is the cytoplasm. It carries out the reaction 4-imidazolone-5-propanoate = trans-urocanate + H2O. The protein operates within amino-acid degradation; L-histidine degradation into L-glutamate; N-formimidoyl-L-glutamate from L-histidine: step 2/3. Its function is as follows. Catalyzes the conversion of urocanate to 4-imidazolone-5-propionate. In Acinetobacter baumannii (strain AB307-0294), this protein is Urocanate hydratase.